We begin with the raw amino-acid sequence, 483 residues long: MASSVSLQFLTNTFISKPQGFCNGIVSAPRPRSNLLRDRQNGVRPIKVASIETQPFPLFQSPASEESSSSELETADPDFYKIGYVRSVRAYGVEFKEGPDGFGVYASKDIEPRRRARVIMEIPLELMITIRQKHPWMFFPDIVPIGHPIFDIINSTDPEIDWDIRLACLLLFSFDRDDHFWRLYGDFLPAADECSSLLLATEEDLAELQDPDLVSTIRQQQKRILDFWEKNWHSGVPLKIKRLAEDPERFIWAVSMAQTRCISMQTRVGALVQELNMMIPYADMLNHSFEPNCFLHWRPKDRMLEVMSNAGQDIKKGEEMTINYMPGQKNNMLMERYGFSTPVNPWDAIKFSGDSRIHLNSFLSVFNIYGLPEEYYHDSELSRGDTFVDGAVIAAARTLPTWSDIDLPPIPSAERKAVKELQDECRKMLAEYPTTAEQDQKLLDSMSEARTTFATAVKYRMHRKMFIGKIIKALDIYQERLLY.

Residues 1 to 62 constitute a chloroplast transit peptide; it reads MASSVSLQFL…TQPFPLFQSP (62 aa). The SET domain maps to 80–325; the sequence is YKIGYVRSVR…KGEEMTINYM (246 aa). Residue tyrosine 324 participates in S-adenosyl-L-methionine binding.

This sequence belongs to the class V-like SAM-binding methyltransferase superfamily. In terms of assembly, component of the transcriptionally active chromosome (TAC) complexes. Interacts with PTAC12/HMR/PAP5 and PTAC7. Binds to SL1/MTERF3. In terms of tissue distribution, mostly expressed in leaves, flowers and seedlings, and, to a lower extent, in stems and roots.

The protein resides in the plastid. Its subcellular location is the chloroplast thylakoid. Its function is as follows. Essential for chloroplast development, especially for thylakoid formation. Involved in plastid gene expression, probably by maintaining plastid-encoded RNA polymerase (PEP) activity. In Arabidopsis thaliana (Mouse-ear cress), this protein is Protein PLASTID TRANSCRIPTIONALLY ACTIVE 14.